Reading from the N-terminus, the 508-residue chain is DEAD-box ATP-dependent RNA helicase 8 (508 aa).

Positions 1-123 (MDPRARYPPG…LKLPPQDTRY (123 aa)) are disordered. Positions 18 to 53 (NPNYYNRGPPLQQQHNHHQQQQTSAPHHQQYVQRQP) are enriched in low complexity. Over residues 54 to 64 (QQHHHHNHHQQ) the composition is skewed to basic residues. The short motif at 134 to 162 (NEFEDYFLKRELLMGIYEKGFERPSPIQE) is the Q motif element. The Helicase ATP-binding domain maps to 165–335 (IPIALTGSDI…DKYLPKPYVI (171 aa)). Residue 178-185 (AKNGTGKT) coordinates ATP. A DEAD box motif is present at residues 283 to 286 (DEAD). The 161-residue stretch at 345 to 505 (GITQFYAFVE…PIPPQIDQAI (161 aa)) folds into the Helicase C-terminal domain.

This sequence belongs to the DEAD box helicase family. DDX6/DHH1 subfamily.

The protein resides in the cytoplasm. Its subcellular location is the P-body. The catalysed reaction is ATP + H2O = ADP + phosphate + H(+). In terms of biological role, ATP-dependent RNA helicase involved in mRNA turnover, and more specifically in mRNA decapping. The protein is DEAD-box ATP-dependent RNA helicase 8 of Oryza sativa subsp. japonica (Rice).